Here is a 249-residue protein sequence, read N- to C-terminus: ATP synthase subunit a, chloroplastic (249 aa).

A run of 5 helical transmembrane segments spans residues 40 to 60 (QVLI…VIAI), 97 to 117 (VPFI…GALL), 136 to 156 (INTT…AGLS), 201 to 221 (LVVV…VMFL), and 222 to 242 (GLFT…AYIG).

The protein belongs to the ATPase A chain family. As to quaternary structure, F-type ATPases have 2 components, CF(1) - the catalytic core - and CF(0) - the membrane proton channel. CF(1) has five subunits: alpha(3), beta(3), gamma(1), delta(1), epsilon(1). CF(0) has four main subunits: a, b, b' and c.

It is found in the plastid. It localises to the chloroplast thylakoid membrane. Key component of the proton channel; it plays a direct role in the translocation of protons across the membrane. The polypeptide is ATP synthase subunit a, chloroplastic (Barbarea verna (Land cress)).